We begin with the raw amino-acid sequence, 549 residues long: Threonine--tRNA ligase catalytic subunit (549 aa).

Positions 142–437 are catalytic; sequence DHRIIGDRLD…LLEHFRGKLP (296 aa). C235, H286, and H414 together coordinate Zn(2+).

This sequence belongs to the class-II aminoacyl-tRNA synthetase family. Homodimer. Probably interacts with its editing subunit. Requires Zn(2+) as cofactor.

It localises to the cytoplasm. It catalyses the reaction tRNA(Thr) + L-threonine + ATP = L-threonyl-tRNA(Thr) + AMP + diphosphate + H(+). Catalyzes the attachment of threonine to tRNA(Thr) in a two-step reaction: L-threonine is first activated by ATP to form Thr-AMP and then transferred to the acceptor end of tRNA(Thr). Also activates L-serine and transfers it to tRNA(Thr) but cannot deacylate incorrectly charged amino acid; unlike most archaea the editing function is found in a freestanding protein. This chain is Threonine--tRNA ligase catalytic subunit, found in Sulfolobus acidocaldarius (strain ATCC 33909 / DSM 639 / JCM 8929 / NBRC 15157 / NCIMB 11770).